A 257-amino-acid chain; its full sequence is MVLIRVLANLLILQLSYAQKSSELVIGGHPCNINEHPFLVLVYHDGYQCGGTLINEEWVLTAAHCDGKKMKLQFGLHSKNVPNKDKQTRVPKEKFFCLSSKNFIKWGKDIMLIRLNRSVNNSTHIAPLSLPSSPPSQNTVCNIMGWGTISPTKEIYPDVPHCANINILDHAVCRAFYPGLLEKSKTLCAGILQGGKDICQGDSGGPLICNGQIQGIVSVGGNPCAEPRVPAIYTKVFDHLDWIKSIIAGNTAATCPL.

An N-terminal signal peptide occupies residues 1 to 18; the sequence is MVLIRVLANLLILQLSYA. The propeptide occupies 19-24; it reads QKSSEL. In terms of domain architecture, Peptidase S1 spans 25–248; it reads VIGGHPCNIN…HLDWIKSIIA (224 aa). Disulfide bonds link Cys31–Cys162, Cys49–Cys65, Cys97–Cys255, Cys141–Cys209, Cys173–Cys188, and Cys199–Cys224. Active-site charge relay system residues include His64 and Asp109. N-linked (GlcNAc...) asparagine glycosylation is found at Asn116, Asn120, and Asn121. Catalysis depends on Ser203, which acts as the Charge relay system.

Belongs to the peptidase S1 family. Snake venom subfamily. Monomer. As to expression, expressed by the venom gland.

The protein localises to the secreted. Snake venom serine protease that may act in the hemostasis system of the prey. The protein is Snake venom serine protease 2C (TLG2C) of Craspedocephalus gramineus (Bamboo pit viper).